The following is a 469-amino-acid chain: Glutamine synthetase (469 aa).

Residues 16 to 100 enclose the GS beta-grasp domain; sequence EGVQYVDLRF…MICDIYDPVT (85 aa). Residues 108 to 469 enclose the GS catalytic domain; sequence TRYIAQKAEQ…PKEFELYWDI (362 aa). Mg(2+)-binding residues include glutamate 133 and glutamate 135. Glutamate 207 lines the ATP pocket. The Mg(2+) site is built by glutamate 212 and glutamate 220. Residues 264-265 and glycine 265 contribute to the L-glutamate site; that span reads NG. Histidine 269 serves as a coordination point for Mg(2+). ATP contacts are provided by residues 271–273 and serine 273; that span reads HFS. The L-glutamate site is built by arginine 321, glutamate 327, and arginine 339. Arginine 339, arginine 344, and lysine 353 together coordinate ATP. Glutamate 358 lines the Mg(2+) pocket. An L-glutamate-binding site is contributed by arginine 360. Residue tyrosine 398 is modified to O-AMP-tyrosine.

Belongs to the glutamine synthetase family. As to quaternary structure, oligomer of 12 subunits arranged in the form of two hexagons. It depends on Mg(2+) as a cofactor.

The protein resides in the cytoplasm. The enzyme catalyses L-glutamate + NH4(+) + ATP = L-glutamine + ADP + phosphate + H(+). With respect to regulation, the activity of this enzyme could be controlled by adenylation under conditions of abundant glutamine. Catalyzes the ATP-dependent biosynthesis of glutamine from glutamate and ammonia. The protein is Glutamine synthetase of Aquifex aeolicus (strain VF5).